We begin with the raw amino-acid sequence, 726 residues long: Probable dipeptidyl-peptidase 5 (726 aa).

The N-terminal stretch at 1–19 is a signal peptide; that stretch reads MAAAKWLIASLAFASSGLA. N96 and N252 each carry an N-linked (GlcNAc...) asparagine glycan. The tract at residues 269–291 is disordered; that stretch reads AEPINKRNGPRTPQGIEGASSSP. The Charge relay system role is filled by S558. N605 carries an N-linked (GlcNAc...) asparagine glycan. Catalysis depends on charge relay system residues D641 and H673. N699 carries an N-linked (GlcNAc...) asparagine glycan.

Belongs to the peptidase S9C family.

The protein localises to the secreted. Its function is as follows. Extracellular dipeptidyl-peptidase which removes N-terminal dipeptides sequentially from polypeptides having unsubstituted N-termini. Contributes to pathogenicity. The protein is Probable dipeptidyl-peptidase 5 (DPP5) of Trichophyton verrucosum (strain HKI 0517).